The following is a 414-amino-acid chain: COUP transcription factor 2 (414 aa).

Residues 1–72 are disordered; that stretch reads MAMVVSTWRD…PGGPGSDKQQ (72 aa). A compositionally biased stretch (pro residues) spans 27-37; the sequence is PPVPGPPPGAP. The segment covering 38–54 has biased composition (low complexity); sequence HTPQTPGQGGPASTPAQ. Position 51 is a phosphothreonine (Thr51). Positions 76–151 form a DNA-binding region, nuclear receptor; it reads HIECVVCGDK…VGMRREAVQR (76 aa). NR C4-type zinc fingers lie at residues 79 to 99 and 115 to 139; these read CVVC…CEGC and CRAN…LKKC. Residues 117–414 form an interaction with ZFPM2 region; sequence ANRNCPIDQH…SFNWPYMAIQ (298 aa). An NR LBD domain is found at 177-403; sequence YLSGYISLLL…TLIRDMLLSG (227 aa). The important for dimerization stretch occupies residues 337 to 414; sequence LQEKSQCALE…SFNWPYMAIQ (78 aa).

This sequence belongs to the nuclear hormone receptor family. NR2 subfamily. As to quaternary structure, interacts with SQSTM1. Binds DNA as a dimer; homodimer or heterodimer with NR2F6. Interacts with NCOA1, NCOA2, NCOA3 and PPARGC1A. Interacts with ZFPM2.

It is found in the nucleus. In terms of biological role, ligand-activated transcription factor. Activated by high concentrations of 9-cis-retinoic acid and all-trans-retinoic acid, but not by dexamethasone, cortisol or progesterone (in vitro). Regulation of the apolipoprotein A-I gene transcription. Binds to DNA site A. May be required to establish ovary identity during early gonad development. This is COUP transcription factor 2 (Nr2f2) from Rattus norvegicus (Rat).